Reading from the N-terminus, the 151-residue chain is uncharacterized protein (151 aa).

This is an uncharacterized protein from Aquifex aeolicus (strain VF5).